The sequence spans 356 residues: 5-formaminoimidazole-4-carboxamide-1-(beta)-D-ribofuranosyl 5'-monophosphate synthetase 2 (356 aa).

Residues His27 and Ser94 each coordinate 5-amino-1-(5-phospho-beta-D-ribosyl)imidazole-4-carboxamide. In terms of domain architecture, ATP-grasp spans 101 to 333 (RENFTGMAVP…YSDLMQKRLS (233 aa)). ATP contacts are provided by residues 145–196 (PHDI…TRYD) and Glu226. Position 255 (Asn255) interacts with 5-amino-1-(5-phospho-beta-D-ribosyl)imidazole-4-carboxamide. Mg(2+) contacts are provided by Glu293 and Glu306.

This sequence belongs to the phosphohexose mutase family. Mg(2+) serves as cofactor. Mn(2+) is required as a cofactor.

It carries out the reaction 5-amino-1-(5-phospho-beta-D-ribosyl)imidazole-4-carboxamide + formate + ATP = 5-formamido-1-(5-phospho-D-ribosyl)imidazole-4-carboxamide + ADP + phosphate. It participates in purine metabolism; IMP biosynthesis via de novo pathway; 5-formamido-1-(5-phospho-D-ribosyl)imidazole-4-carboxamide from 5-amino-1-(5-phospho-D-ribosyl)imidazole-4-carboxamide (formate route): step 1/1. Catalyzes the ATP- and formate-dependent formylation of 5-aminoimidazole-4-carboxamide-1-beta-d-ribofuranosyl 5'-monophosphate (AICAR) to 5-formaminoimidazole-4-carboxamide-1-beta-d-ribofuranosyl 5'-monophosphate (FAICAR) in the absence of folates. This is 5-formaminoimidazole-4-carboxamide-1-(beta)-D-ribofuranosyl 5'-monophosphate synthetase 2 from Methanosarcina mazei (strain ATCC BAA-159 / DSM 3647 / Goe1 / Go1 / JCM 11833 / OCM 88) (Methanosarcina frisia).